The chain runs to 456 residues: Tyrosine phenol-lyase (456 aa).

Lys-257 carries the post-translational modification N6-(pyridoxal phosphate)lysine.

It belongs to the beta-eliminating lyase family. Homotetramer. Requires pyridoxal 5'-phosphate as cofactor. Post-translationally, contains L-DOPA (3',4'-dihydroxyphenylalanine).

The protein resides in the cytoplasm. It catalyses the reaction L-tyrosine + H2O = phenol + pyruvate + NH4(+). This Enterobacter agglomerans (Erwinia herbicola) protein is Tyrosine phenol-lyase (tpl).